The following is a 625-amino-acid chain: Endo-1,4-beta-xylanase A (625 aa).

The signal sequence occupies residues 1-19 (MKLFQIFPLLLSLTSVTLA). In terms of domain architecture, GH11 1 spans 35–231 (VSTGHDVKKI…TGGGCSGSVE (197 aa)). The disordered stretch occupies residues 245–283 (DGKSKGGSSSGGSNGQGLGNGQGNGQGQGNGQGQSATGS). Positions 252 to 276 (SSSGGSNGQGLGNGQGNGQGQGNGQ) are enriched in gly residues. A linker region spans residues 255–279 (GGSNGQGLGNGQGNGQGQGNGQGQS). A run of 2 repeats spans residues 259–268 (GQGLGNGQGN) and 269–278 (GQGQGNGQGQ). Residues 259-278 (GQGLGNGQGNGQGQGNGQGQ) form a 2 X 10 AA tandem repeats of G-Q-G-[LQ]-G-N-G-Q-G-[NQ] region. CBM10 domains are found at residues 285–324 (KCPS…CGCG) and 332–371 (NCPS…CGCG). A linker region spans residues 374–403 (NTTPTTTTKKSNNSQPTQGQSNNNSSTNTN). A disordered region spans residues 379-399 (TTTKKSNNSQPTQGQSNNNSS). Residues 416–617 (TETSNKVGSI…GSGTSGTADF (202 aa)) form the GH11 2 domain. Glu-510 functions as the Nucleophile in the catalytic mechanism. The active-site Proton donor is the Glu-603.

Belongs to the glycosyl hydrolase 11 (cellulase G) family.

The catalysed reaction is Endohydrolysis of (1-&gt;4)-beta-D-xylosidic linkages in xylans.. It functions in the pathway glycan degradation; xylan degradation. Its function is as follows. Hydrolyzes 1,4-beta linked polysaccharide backbones of xylans, one of the major hemicellulose components in hardwoods and softwoods. It is more active against xylopentaose than xylotetraose, has trace activity against xylotriose. The major products released from hydrolysis of xylooligosaccharides are xylobiose and xylotriose. The reiterated 40 AA domain is involved in binding the cellulase-hemicellulase complex. The sequence is that of Endo-1,4-beta-xylanase A (XYNA) from Piromyces sp.